A 281-amino-acid polypeptide reads, in one-letter code: Large ribosomal subunit protein uL2 (281 aa).

The segment at 208 to 281 (AGRSRYAGQR…RGRKRGPHTR (74 aa)) is disordered. Residues 254 to 281 (TVGKKTRSHKARSNKFIVRGRKRGPHTR) show a composition bias toward basic residues.

It belongs to the universal ribosomal protein uL2 family. Part of the 50S ribosomal subunit. Forms a bridge to the 30S subunit in the 70S ribosome.

Functionally, one of the primary rRNA binding proteins. Required for association of the 30S and 50S subunits to form the 70S ribosome, for tRNA binding and peptide bond formation. It has been suggested to have peptidyltransferase activity; this is somewhat controversial. Makes several contacts with the 16S rRNA in the 70S ribosome. The protein is Large ribosomal subunit protein uL2 of Limosilactobacillus fermentum (strain NBRC 3956 / LMG 18251) (Lactobacillus fermentum).